We begin with the raw amino-acid sequence, 150 residues long: D-aminoacyl-tRNA deacylase (150 aa).

The Gly-cisPro motif, important for rejection of L-amino acids motif lies at 138-139 (GP).

The protein belongs to the DTD family. As to quaternary structure, homodimer.

Its subcellular location is the cytoplasm. It carries out the reaction glycyl-tRNA(Ala) + H2O = tRNA(Ala) + glycine + H(+). It catalyses the reaction a D-aminoacyl-tRNA + H2O = a tRNA + a D-alpha-amino acid + H(+). Functionally, an aminoacyl-tRNA editing enzyme that deacylates mischarged D-aminoacyl-tRNAs. Also deacylates mischarged glycyl-tRNA(Ala), protecting cells against glycine mischarging by AlaRS. Acts via tRNA-based rather than protein-based catalysis; rejects L-amino acids rather than detecting D-amino acids in the active site. By recycling D-aminoacyl-tRNA to D-amino acids and free tRNA molecules, this enzyme counteracts the toxicity associated with the formation of D-aminoacyl-tRNA entities in vivo and helps enforce protein L-homochirality. In Chromobacterium violaceum (strain ATCC 12472 / DSM 30191 / JCM 1249 / CCUG 213 / NBRC 12614 / NCIMB 9131 / NCTC 9757 / MK), this protein is D-aminoacyl-tRNA deacylase.